Consider the following 29-residue polypeptide: U-homostoxin-Hdu1a (29 aa).

An O-linked (GlcNAc...) threonine glycan is attached at Thr1. Cystine bridges form between Cys7/Cys19 and Cys10/Cys25.

This sequence belongs to the sea anemone BBH family.

Its subcellular location is the secreted. The protein resides in the nematocyst. In Homostichanthus duerdeni (Sea anemone), this protein is U-homostoxin-Hdu1a.